Here is a 76-residue protein sequence, read N- to C-terminus: Tautomerase PptA (76 aa).

Catalysis depends on P2, which acts as the Proton acceptor; via imino nitrogen.

This sequence belongs to the 4-oxalocrotonate tautomerase family. PptA subfamily. As to quaternary structure, homodimer.

Its subcellular location is the cytoplasm. In Pectobacterium carotovorum subsp. carotovorum (strain PC1), this protein is Tautomerase PptA.